Reading from the N-terminus, the 612-residue chain is Calcium-dependent protein kinase 27 (612 aa).

Residue Gly2 is the site of N-myristoyl glycine attachment. Positions 23–132 are disordered; the sequence is PRHAAPSSPS…AHIKRISSAG (110 aa). Over residues 28 to 50 the composition is skewed to low complexity; the sequence is PSSPSQPTTTSRSIPVVLPSAPS. A compositionally biased stretch (pro residues) spans 51–100; sequence SKPPPPTQTAPPVPVVISEPPPPQPQPEPQPAAPSQPPPPQEQPSPPPPA. Over residues 117 to 127 the composition is skewed to basic residues; that stretch reads SRAKKPAHIKR. One can recognise a Protein kinase domain in the interval 150–408; that stretch reads YSLGRKLGQG…AHEVLCHPWL (259 aa). Residues 156–164 and Lys179 each bind ATP; that span reads LGQGQFGTT. Residue Asp274 is the Proton acceptor of the active site. An autoinhibitory domain region spans residues 414-444; sequence APDKPLDSAVLSRLRQFSAMNKLKKMALRVI. EF-hand domains lie at 451 to 486, 487 to 522, 523 to 558, and 561 to 592; these read EEIA…VGAN, MKES…LNKV, ERED…FGIE, and RLED…TTTG. Residues Asp464, Asp466, Ser468, Gln470, Glu475, Asp500, Asp502, Ser504, Thr506, Glu511, Asp536, Asp538, Ser540, Tyr542, Glu547, Asp570, Asp572, Asp574, Arg576, and Glu581 each coordinate Ca(2+).

The protein belongs to the protein kinase superfamily. Ser/Thr protein kinase family. CDPK subfamily.

It is found in the membrane. It catalyses the reaction L-seryl-[protein] + ATP = O-phospho-L-seryl-[protein] + ADP + H(+). It carries out the reaction L-threonyl-[protein] + ATP = O-phospho-L-threonyl-[protein] + ADP + H(+). With respect to regulation, activated by calcium. Autophosphorylation may play an important role in the regulation of the kinase activity. May play a role in signal transduction pathways that involve calcium as a second messenger. The chain is Calcium-dependent protein kinase 27 from Oryza sativa subsp. japonica (Rice).